The following is a 580-amino-acid chain: Pescadillo homolog (580 aa).

Residues 291-303 show a composition bias toward acidic residues; the sequence is EPEEENEVDEFPA. Residues 291–321 are disordered; it reads EPEEENEVDEFPADPENAGQEEEQKKQLQEE. Over residues 312–321 the composition is skewed to basic and acidic residues; sequence EEQKKQLQEE. The region spanning 323–416 is the BRCT domain; that stretch reads KHKSMFVGLK…MLLPVEDYFP (94 aa). Residues 448–496 form a disordered region; sequence KGENPEDDDDDDEEDDEDEEEDDEDEDDEENEEEEEDKKLRHLENKKVG. The span at 452–483 shows a compositional bias: acidic residues; it reads PEDDDDDDEEDDEDEEEDDEDEDDEENEEEEE. Positions 484–494 are enriched in basic and acidic residues; it reads DKKLRHLENKK.

This sequence belongs to the pescadillo family. In terms of assembly, component of the PeBoW complex, composed of bop1, pes1 and wdr12. The complex is held together by bop1, which interacts with pes1 via its N-terminal domain and with wdr12 via a high-affinity interaction between the seven-bladed beta-propeller domains of the 2 proteins. The PeBoW complex associates with the 66S pre-ribosome.

It is found in the nucleus. It localises to the nucleolus. Its subcellular location is the nucleoplasm. Its function is as follows. Component of the PeBoW complex, which is required for maturation of 28S and 5.8S ribosomal RNAs and formation of the 60S ribosome. The protein is Pescadillo homolog (pes1) of Xenopus tropicalis (Western clawed frog).